A 366-amino-acid chain; its full sequence is tRNA(Met) cytidine acetate ligase (366 aa).

Residues 7 to 20 (IAEF…HQYL), Gly-101, Asn-145, and Arg-170 each bind ATP.

The protein belongs to the TmcAL family.

The protein resides in the cytoplasm. The catalysed reaction is cytidine(34) in elongator tRNA(Met) + acetate + ATP = N(4)-acetylcytidine(34) in elongator tRNA(Met) + AMP + diphosphate. Its function is as follows. Catalyzes the formation of N(4)-acetylcytidine (ac(4)C) at the wobble position of elongator tRNA(Met), using acetate and ATP as substrates. First activates an acetate ion to form acetyladenylate (Ac-AMP) and then transfers the acetyl group to tRNA to form ac(4)C34. This chain is tRNA(Met) cytidine acetate ligase, found in Pediococcus pentosaceus (strain ATCC 25745 / CCUG 21536 / LMG 10740 / 183-1w).